A 700-amino-acid polypeptide reads, in one-letter code: UvrABC system protein B (700 aa).

The region spanning 26 to 183 (SGLHRGDRIQ…RALVGIQYLR (158 aa)) is the Helicase ATP-binding domain. 39–46 (GVTGSGKT) serves as a coordination point for ATP. A Beta-hairpin motif is present at residues 92 to 115 (YYDYYQPEAYVPSSDTYIEKDASI). The Helicase C-terminal domain occupies 430 to 596 (QVDDLLHEIR…GVTKSVDEVR (167 aa)). The disordered stretch occupies residues 608–627 (REGEAPAPRRLASESAPRSR). A UVR domain is found at 631–666 (ETLVGELEIAMREAAVALDFEAAARLRDQLFEVRTA). The tract at residues 667–700 (LGQAPSEARGNAQAPKRPPGSAPQRRAGGGRRGR) is disordered.

The protein belongs to the UvrB family. As to quaternary structure, forms a heterotetramer with UvrA during the search for lesions. Interacts with UvrC in an incision complex.

The protein resides in the cytoplasm. Its function is as follows. The UvrABC repair system catalyzes the recognition and processing of DNA lesions. A damage recognition complex composed of 2 UvrA and 2 UvrB subunits scans DNA for abnormalities. Upon binding of the UvrA(2)B(2) complex to a putative damaged site, the DNA wraps around one UvrB monomer. DNA wrap is dependent on ATP binding by UvrB and probably causes local melting of the DNA helix, facilitating insertion of UvrB beta-hairpin between the DNA strands. Then UvrB probes one DNA strand for the presence of a lesion. If a lesion is found the UvrA subunits dissociate and the UvrB-DNA preincision complex is formed. This complex is subsequently bound by UvrC and the second UvrB is released. If no lesion is found, the DNA wraps around the other UvrB subunit that will check the other stand for damage. This chain is UvrABC system protein B, found in Gemmatimonas aurantiaca (strain DSM 14586 / JCM 11422 / NBRC 100505 / T-27).